The following is a 2399-amino-acid chain: Norsolorinic acid synthase (2399 aa).

The interval 10–247 (LVFGDQTYDF…RQIPIYVPAH (238 aa)) is starter unit:ACP transacylase (SAT) domain. A Ketosynthase family 3 (KS3) domain is found at 372 to 805 (KSKLAIVSMS…GGNTALLIED (434 aa)). Catalysis depends on for beta-ketoacyl synthase activity residues Cys544, His679, and His722. The interval 905–1192 (FAFTGQGSQY…LCGMIKNILG (288 aa)) is malonyl-CoA:ACP transacylase (MAT) domain. Ser995 functions as the For acyl/malonyl transferase activity in the catalytic mechanism. A disordered region spans residues 1307-1327 (VQEAPAAKTETKKMSKLDPTK). Positions 1315 to 1327 (TETKKMSKLDPTK) are enriched in basic and acidic residues. The N-terminal hotdog fold stretch occupies residues 1340–1483 (HKVIEEKTEP…CTVRFTTDSQ (144 aa)). A PKS/mFAS DH domain is found at 1340–1658 (HKVIEEKTEP…LRSVPRKALR (319 aa)). The tract at residues 1353-1658 (QFTVETDISR…LRSVPRKALR (306 aa)) is product template (PT) domain. Catalysis depends on His1372, which acts as the Proton acceptor; for dehydratase activity. The interval 1510 to 1658 (LTHYNTKSGY…LRSVPRKALR (149 aa)) is C-terminal hotdog fold. Asp1570 functions as the Proton donor; for dehydratase activity in the catalytic mechanism. Positions 1665–1734 (MDKGIRQRGG…AALKASVPKA (70 aa)) are disordered. Residues 1677 to 1698 (GAAKGAVAAPAPAKKMVEPVKA) show a composition bias toward low complexity. Positions 1708–1723 (AAPPSPSKAAPPPAPK) are enriched in pro residues. Positions 1724-1734 (PAALKASVPKA) are enriched in low complexity. 3 consecutive Carrier domains span residues 1733 to 1812 (KADP…AGAA), 1877 to 1953 (SKVF…GGSG), and 2020 to 2099 (VART…TGSS). Residues Ser1770, Ser1911, and Ser2057 each carry the O-(pantetheine 4'-phosphoryl)serine modification. Over residues 2098 to 2115 (SSADSDSSSVASNPADPA) the composition is skewed to low complexity. The interval 2098–2149 (SSADSDSSSVASNPADPAATPPRSESSDTEPDDEAPSKPKSGPGSTDSCRST) is disordered. A compositionally biased stretch (polar residues) spans 2140-2149 (PGSTDSCRST). The segment at 2164–2393 (TLFLLPDGGG…KARVNYVSDL (230 aa)) is thioesterase/Claisen cyclase (TE/CLC) domain. Catalysis depends on Ser2234, which acts as the For thioesterase activity.

The cofactor is pantetheine 4'-phosphate.

It catalyses the reaction hexanoyl-[ACP] + 7 malonyl-CoA + 6 H(+) = noranthrone + holo-[ACP] + 7 CO2 + 7 CoA + 2 H2O. It participates in mycotoxin biosynthesis. In terms of biological role, polyketide synthase; part of the fragmented gene cluster that mediates the biosynthesis of dothistromin (DOTH), a polyketide toxin very similar in structure to the aflatoxin precursor, versicolorin B. The first step of the pathway is the conversion of acetate to norsolorinic acid (NOR) and requires the fatty acid synthase subunits hexA and hexB, as well as the polyketide synthase pksA. PksA combines a hexanoyl starter unit and 7 malonyl-CoA extender units to synthesize the precursor NOR. The hexanoyl starter unit is provided to the acyl-carrier protein (ACP) domain by the fungal fatty acid synthase hexA/hexB. The second step is the conversion of NOR to averantin (AVN) and requires the norsolorinic acid ketoreductase nor1, which catalyzes the dehydration of norsolorinic acid to form (1'S)-averantin. The cytochrome P450 monooxygenase avnA then catalyzes the hydroxylation of AVN to 5'hydroxyaverantin (HAVN). The next step is performed by adhA that transforms HAVN to averufin (AVF). Averufin might then be converted to hydroxyversicolorone by cypX and avfA. Hydroxyversicolorone is further converted versiconal hemiacetal acetate (VHA) by moxY. VHA is then the substrate for the versiconal hemiacetal acetate esterase est1 to yield versiconal (VAL). Versicolorin B synthase vbsA then converts VAL to versicolorin B (VERB) by closing the bisfuran ring. Then, the activity of the versicolorin B desaturase verB leads to versicolorin A (VERA). DotB, a predicted chloroperoxidase, may perform epoxidation of the A-ring of VERA. Alternatively, a cytochrome P450, such as cypX or avnA could catalyze this step. It is also possible that another, uncharacterized, cytochrome P450 enzyme is responsible for this step. Opening of the epoxide could potentially be achieved by the epoxide hydrolase epoA. However, epoA seems not to be required for DOTH biosynthesis, but other epoxide hydrolases may have the ability to complement this hydrolysis. Alternatively, opening of the epoxide ring could be achieved non-enzymatically. The next step is the deoxygenation of ring A to yield the 5,8-dihydroxyanthraquinone which is most likely catalyzed by the NADPH dehydrogenase encoded by ver1. The last stages of DOTH biosynthesis are proposed to involve hydroxylation of the bisfuran. OrdB and norB might have oxidative roles here. An alternative possibility is that cytochrome P450 monoogenases such as avnA and cypX might perform these steps in addition to previously proposed steps. The polypeptide is Norsolorinic acid synthase (Dothistroma septosporum (Red band needle blight fungus)).